An 81-amino-acid chain; its full sequence is Cytotoxin 3d (81 aa).

An N-terminal signal peptide occupies residues 1 to 21 (MKTLLLTLVVVTIVCLDLGYT). Intrachain disulfides connect cysteine 24-cysteine 42, cysteine 35-cysteine 59, cysteine 63-cysteine 74, and cysteine 75-cysteine 80.

Belongs to the three-finger toxin family. Short-chain subfamily. Type IA cytotoxin sub-subfamily. In terms of assembly, monomer in solution; Homodimer and oligomer in the presence of negatively charged lipids forming a pore with a size ranging between 20 and 30 Angstroms. In terms of tissue distribution, expressed by the venom gland.

The protein resides in the secreted. Its subcellular location is the target cell membrane. Functionally, shows cytolytic activity on many different cells by forming pore in lipid membranes. In vivo, increases heart rate or kills the animal by cardiac arrest. In addition, it binds to heparin with high affinity, interacts with Kv channel-interacting protein 1 (KCNIP1) in a calcium-independent manner, and binds to integrin alpha-V/beta-3 (ITGAV/ITGB3) with moderate affinity. In Naja atra (Chinese cobra), this protein is Cytotoxin 3d.